We begin with the raw amino-acid sequence, 77 residues long: RNA-binding protein Hfq (77 aa).

In terms of domain architecture, Sm spans 10-70 (DAFLNHVRKT…ISTVMPAQPI (61 aa)).

It belongs to the Hfq family. In terms of assembly, homohexamer.

Its function is as follows. RNA chaperone that binds small regulatory RNA (sRNAs) and mRNAs to facilitate mRNA translational regulation in response to envelope stress, environmental stress and changes in metabolite concentrations. Also binds with high specificity to tRNAs. The chain is RNA-binding protein Hfq from Jannaschia sp. (strain CCS1).